Consider the following 61-residue polypeptide: Metallothionein-1 (61 aa).

The residue at position 1 (M1) is an N-acetylmethionine. A beta region spans residues 1-29 (MDPNCSCSTGGSCTCSSSCGCKNCKCTSC). Positions 5, 7, 13, 15, 19, 21, 24, 26, 29, 33, 34, 36, 37, 41, 44, 48, 50, 57, 59, and 60 each coordinate a divalent metal cation. An alpha region spans residues 30–61 (KKSCCSCCPVGCSKCAQGCVCKGASDKCTCCA).

Belongs to the metallothionein superfamily. Type 1 family.

In terms of biological role, metallothioneins have a high content of cysteine residues that bind various heavy metals; these proteins are transcriptionally regulated by both heavy metals and glucocorticoids. The chain is Metallothionein-1 (Mt1) from Rattus norvegicus (Rat).